Consider the following 446-residue polypeptide: Glutamine synthetase (446 aa).

A GS beta-grasp domain is found at 18–103 (ENVRYLRLQF…LICDVYKTDG (86 aa)). The region spanning 110-446 (PRANLKRVLK…WERDQYMKQY (337 aa)) is the GS catalytic domain. The Mg(2+) site is built by E134 and E136. E186 serves as a coordination point for ATP. Residues E191 and E198 each coordinate Mg(2+). Residues 242–243 (NG) and G243 contribute to the L-glutamate site. A Mg(2+)-binding site is contributed by H247. S251 is an ATP binding site. L-glutamate-binding residues include R300, E306, and R318. Positions 318 and 323 each coordinate ATP. E335 is a Mg(2+) binding site. An L-glutamate-binding site is contributed by R337.

It belongs to the glutamine synthetase family. Oligomer of 12 subunits arranged in the form of two hexagons. In its feedback-inhibited form, interacts with TnrA in order to block its DNA-binding activity. Requires Mg(2+) as cofactor.

The protein localises to the cytoplasm. The enzyme catalyses L-glutamate + NH4(+) + ATP = L-glutamine + ADP + phosphate + H(+). Its activity is regulated as follows. Inhibited by glutamine. In terms of biological role, glutamine synthetase (GS) is an unusual multitasking protein that functions as an enzyme, a transcription coregulator, and a chaperone in ammonium assimilation and in the regulation of genes involved in nitrogen metabolism. It catalyzes the ATP-dependent biosynthesis of glutamine from glutamate and ammonia. Feedback-inhibited GlnA also interacts with and regulates the activity of the transcriptional regulator TnrA. During nitrogen limitation, TnrA is in its DNA-binding active state and turns on the transcription of genes required for nitrogen assimilation. Under conditions of nitrogen excess, feedback-inhibited GlnA forms a stable complex with TnrA, which inhibits its DNA-binding activity. In contrast, feedback-inhibited GlnA acts as a chaperone to stabilize the DNA-binding activity of GlnR, which represses the transcription of nitrogen assimilation genes. The polypeptide is Glutamine synthetase (Staphylococcus aureus (strain MRSA252)).